A 347-amino-acid chain; its full sequence is Phenylalanine--tRNA ligase alpha subunit (347 aa).

Mg(2+) is bound at residue E268.

Belongs to the class-II aminoacyl-tRNA synthetase family. Phe-tRNA synthetase alpha subunit type 1 subfamily. In terms of assembly, tetramer of two alpha and two beta subunits. Requires Mg(2+) as cofactor.

Its subcellular location is the cytoplasm. The enzyme catalyses tRNA(Phe) + L-phenylalanine + ATP = L-phenylalanyl-tRNA(Phe) + AMP + diphosphate + H(+). The chain is Phenylalanine--tRNA ligase alpha subunit from Leptothrix cholodnii (strain ATCC 51168 / LMG 8142 / SP-6) (Leptothrix discophora (strain SP-6)).